A 408-amino-acid chain; its full sequence is Putative gustatory receptor 58b (408 aa).

Over 1–44 (MLHPKLGRVMNVVYYHSVVFALMSTTLRIRSCRKCLRLEKVSRT) the chain is Cytoplasmic. The helical transmembrane segment at 45 to 65 (YTIYSFFVGIFLFLNLYFMVP) threads the bilayer. Over 66–82 (RIMEDGYMKYNIVLQWN) the chain is Extracellular. A helical transmembrane segment spans residues 83 to 103 (FFVMLFLRAIAVVSCYGTLWL). Residues 104–150 (KRHKIIQLYKYSLIYWKRFGHITRAIVDKKELLDLQESLARIMIRKI) lie on the Cytoplasmic side of the membrane. The chain crosses the membrane as a helical span at residues 151-171 (ILLYSAFLCSTVLQYQLLSVI). Residues 172-193 (NPQIFLAFCARLTHFLHFLCVK) are Extracellular-facing. Residues 194–214 (MGFFGVLVLLNHQFLVIHLAI) traverse the membrane as a helical segment. At 215–245 (NALHGRKARKKWKALRSVAAMHLKTLRLARR) the chain is on the cytoplasmic side. A helical transmembrane segment spans residues 246–266 (IFDMFDIANATVFINMFMTAI). Topologically, residues 267–284 (NILYHAVQYSNSSIKSNG) are extracellular. N-linked (GlcNAc...) asparagine glycosylation is present at N277. Residues 285–305 (WGILFGNGLIVFNFWGTMALM) traverse the membrane as a helical segment. The Cytoplasmic segment spans residues 306 to 364 (EMLDSVVTSCNNTGQQLRQLSDLPKVGPKMQRELDVFTMQLRQNRLVYKICGIVELDKP). The chain crosses the membrane as a helical span at residues 365–385 (ACLSYIGSILSNVIILMQFDL). The Extracellular segment spans residues 386–408 (RRQRQPINDRQYLIHLMKNKTKV). Residue N404 is glycosylated (N-linked (GlcNAc...) asparagine).

Belongs to the insect chemoreceptor superfamily. Gustatory receptor (GR) family. Gr22e subfamily. As to expression, expressed in the adult labellar chemosensory neurons, labral sense organ and thorax. In larvae, is in neurons of the terminal external chemosensory organ as well as in the dorsal pharyngeal sense organ.

It localises to the cell membrane. In terms of biological role, probable gustatory receptor which mediates acceptance or avoidance behavior, depending on its substrates. This Drosophila melanogaster (Fruit fly) protein is Putative gustatory receptor 58b (Gr58b).